The sequence spans 231 residues: Large ribosomal subunit protein uL1 (231 aa).

It belongs to the universal ribosomal protein uL1 family. As to quaternary structure, part of the 50S ribosomal subunit.

Its function is as follows. Binds directly to 23S rRNA. The L1 stalk is quite mobile in the ribosome, and is involved in E site tRNA release. In terms of biological role, protein L1 is also a translational repressor protein, it controls the translation of the L11 operon by binding to its mRNA. The chain is Large ribosomal subunit protein uL1 from Allorhizobium ampelinum (strain ATCC BAA-846 / DSM 112012 / S4) (Agrobacterium vitis (strain S4)).